Consider the following 812-residue polypeptide: Probable beta-glucosidase D (812 aa).

An N-terminal signal peptide occupies residues 1 to 18 (MRVPSLSVLSFLLGTALA). N-linked (GlcNAc...) asparagine glycosylation is found at asparagine 53 and asparagine 188. Residues 186–248 (ETNRTGGMGG…GMGGGMAGSS (63 aa)) are disordered. A compositionally biased stretch (gly residues) spans 191-207 (GGMGGGGGAPGGGGMGR). Residues 211–225 (FSSSVPGGMSPTSSA) show a composition bias toward polar residues. A compositionally biased stretch (gly residues) spans 236–245 (GGSGMGGGMA). Asparagine 296 carries N-linked (GlcNAc...) asparagine glycosylation. Aspartate 324 is a catalytic residue. Asparagine 360, asparagine 384, asparagine 422, asparagine 501, asparagine 592, and asparagine 646 each carry an N-linked (GlcNAc...) asparagine glycan.

This sequence belongs to the glycosyl hydrolase 3 family.

The protein localises to the secreted. The enzyme catalyses Hydrolysis of terminal, non-reducing beta-D-glucosyl residues with release of beta-D-glucose.. Its pathway is glycan metabolism; cellulose degradation. In terms of biological role, beta-glucosidases are one of a number of cellulolytic enzymes involved in the degradation of cellulosic biomass. Catalyzes the last step releasing glucose from the inhibitory cellobiose. The sequence is that of Probable beta-glucosidase D (bglD) from Emericella nidulans (strain FGSC A4 / ATCC 38163 / CBS 112.46 / NRRL 194 / M139) (Aspergillus nidulans).